Here is a 373-residue protein sequence, read N- to C-terminus: S-adenosylmethionine:tRNA ribosyltransferase-isomerase (373 aa).

The protein belongs to the QueA family. As to quaternary structure, monomer.

The protein localises to the cytoplasm. It catalyses the reaction 7-aminomethyl-7-carbaguanosine(34) in tRNA + S-adenosyl-L-methionine = epoxyqueuosine(34) in tRNA + adenine + L-methionine + 2 H(+). It functions in the pathway tRNA modification; tRNA-queuosine biosynthesis. In terms of biological role, transfers and isomerizes the ribose moiety from AdoMet to the 7-aminomethyl group of 7-deazaguanine (preQ1-tRNA) to give epoxyqueuosine (oQ-tRNA). The polypeptide is S-adenosylmethionine:tRNA ribosyltransferase-isomerase (Caulobacter sp. (strain K31)).